Reading from the N-terminus, the 109-residue chain is MSKSTIKFVRLSPTKTRLIAKEIQGMNAEFALATLEFTPNRGAKYIANAILSAVANGGFEPNEVIVKSCRVDAGPVLKRFRPRARGTASRIRKPTSHIMVEVSKPSKEA.

The segment covering 84 to 95 (ARGTASRIRKPT) has biased composition (basic residues). The interval 84-109 (ARGTASRIRKPTSHIMVEVSKPSKEA) is disordered.

This sequence belongs to the universal ribosomal protein uL22 family. In terms of assembly, part of the 50S ribosomal subunit.

Its function is as follows. This protein binds specifically to 23S rRNA; its binding is stimulated by other ribosomal proteins, e.g. L4, L17, and L20. It is important during the early stages of 50S assembly. It makes multiple contacts with different domains of the 23S rRNA in the assembled 50S subunit and ribosome. The globular domain of the protein is located near the polypeptide exit tunnel on the outside of the subunit, while an extended beta-hairpin is found that lines the wall of the exit tunnel in the center of the 70S ribosome. The polypeptide is Large ribosomal subunit protein uL22 (Campylobacter hominis (strain ATCC BAA-381 / DSM 21671 / CCUG 45161 / LMG 19568 / NCTC 13146 / CH001A)).